Reading from the N-terminus, the 196-residue chain is SAGA-associated factor 11 homolog (196 aa).

The tract at residues 1 to 22 is disordered; the sequence is MSAANMPTTTGAQGSGNQVPTT. Residues 106 to 127 form an SGF11-type zinc finger; it reads CTCPNCDRLVAAARFAPHLEKC. The disordered stretch occupies residues 141–196; the sequence is RLATKEGATSAHLHSSGNTGGTDDEDDVDWSSDKRRKKSNQNSRNNGSKKNNGKTF. Residue serine 172 is modified to Phosphoserine. Residues 180–196 show a composition bias toward low complexity; the sequence is NQNSRNNGSKKNNGKTF.

It belongs to the SGF11 family. As to quaternary structure, component of some SAGA transcription coactivator-HAT complexes, at least composed of Ada2b, not/nonstop, Pcaf/Gcn5, Sgf11 and Spt3. Within the SAGA complex, Sgf11, e(y)2, and not/nonstop form an additional subcomplex of SAGA called the DUB module (deubiquitination module). Interacts directly with not/nonstop. Interacts with the AMEX complex component xmas-2. Interacts with Cbp80; important for promoter recruitment of Sgf11 that is not associated with the DUB module.

The protein localises to the nucleus. It localises to the nucleoplasm. Its subcellular location is the cytoplasm. Component of the transcription regulatory histone acetylation (HAT) complex SAGA, a multiprotein complex that activates transcription by remodeling chromatin and mediating histone acetylation and deubiquitination. Within the SAGA complex, participates in a subcomplex that specifically deubiquitinates histone H2B. The SAGA complex is recruited to specific gene promoters by activators, where it is required for transcription. Required for nuclear receptor-mediated transactivation. Binds independently on SAGA to promoters in an RNA-dependent manner. Binds to mRNA and is essential for total mRNA export from the nucleus. Required to counteract heterochromatin silencing. Controls the development of neuronal connectivity in visual system by being required for accurate axon targeting in the optic lobe. Required for expression of ecdysone-induced genes such as br/broad. This is SAGA-associated factor 11 homolog from Drosophila simulans (Fruit fly).